Reading from the N-terminus, the 576-residue chain is FtsZ-localized protein C (576 aa).

As to quaternary structure, interacts with FtsZ filaments.

The protein localises to the cytoplasm. Its subcellular location is the cell inner membrane. Membrane anchor for FtsZ. Binds and recruits FtsZ polymers to membranes early in the cell cycle. May also improve the efficiency of cytokinesis through the regulation of cell wall hydrolysis. In Caulobacter vibrioides (strain NA1000 / CB15N) (Caulobacter crescentus), this protein is FtsZ-localized protein C.